The sequence spans 462 residues: Ubiquitin carboxyl-terminal hydrolase calypso (462 aa).

The UCH catalytic domain maps to 29 to 260; it reads GWLELESDPG…IRFNLMAVVP (232 aa). Catalysis depends on cysteine 115, which acts as the Nucleophile. The active-site Proton donor is histidine 197. In terms of domain architecture, ULD spans 357 to 385; the sequence is NYDKFICTFLTMLAHQGVLGELVSQHLLP. The tract at residues 387 to 462 is positively charged C-terminal tail required for binding nucleosomes; the sequence is KKISGQSAAN…KGRNKCRKRK (76 aa). Residues 394–462 are disordered; that stretch reads AANRLNKQNS…KGRNKCRKRK (69 aa). Over residues 399-447 the composition is skewed to low complexity; the sequence is NKQNSAAASTANSSAGATAGGAKSQQQQQQQQQPQQPQTPKNGKSPGKT. The span at 448 to 462 shows a compositional bias: basic residues; sequence PGRRRKGRNKCRKRK.

It belongs to the peptidase C12 family. BAP1 subfamily. In terms of assembly, catalytic component of the polycomb repressive deubiquitinase (PR-DUB) complex, at least composed of caly/calypso, Asx and sba (MBD5/6 homolog). The PR-DUB complex associates with nucleosomes to mediate deubiquitination of histone H2AK118ub1 substrates; the association requires the positively charged C-terminal tail of caly, probably due to direct binding of DNA. Interacts (via ULD domain) with Asx (via DEUBAD domain); the interaction produces a stable heterodimer with a composite binding site for ubiquitin. Homodimerizes (via coiled-coil hinge-region between the UCH and ULD domains) to mediate assembly of 2 copies of the caly-Asx heterodimer into a bisymmetric tetramer; dimerization enhances PR-DUB association with nucleosomes.

The protein localises to the nucleus. It carries out the reaction Thiol-dependent hydrolysis of ester, thioester, amide, peptide and isopeptide bonds formed by the C-terminal Gly of ubiquitin (a 76-residue protein attached to proteins as an intracellular targeting signal).. Its function is as follows. Catalytic component of the polycomb repressive deubiquitinase (PR-DUB) complex, a complex that specifically mediates deubiquitination of histone H2A monoubiquitinated at 'Lys-119' (H2AK118ub1). Mediates bisymmetric organization of the PR-DUB complex and is involved in association with nucleosomes to mediate deubiquitination. Does not deubiquitinate monoubiquitinated histone H2B. Required to maintain the transcriptionally repressive state of homeotic genes throughout development. The PR-DUB complex has weak or no activity toward 'Lys-48'- and 'Lys-63'-linked polyubiquitin chains. Polycomb group (PcG) protein. In Drosophila virilis (Fruit fly), this protein is Ubiquitin carboxyl-terminal hydrolase calypso.